Here is an 85-residue protein sequence, read N- to C-terminus: Large ribosomal subunit protein bL27 (85 aa).

The interval 1-23 is disordered; it reads MAHKKAGGSSRNGRDSESKRLGV.

Belongs to the bacterial ribosomal protein bL27 family.

This is Large ribosomal subunit protein bL27 from Nitrosococcus oceani (strain ATCC 19707 / BCRC 17464 / JCM 30415 / NCIMB 11848 / C-107).